A 497-amino-acid polypeptide reads, in one-letter code: Putative diacyglycerol O-acyltransferase MT3584 (497 aa).

The active-site Proton acceptor is H143.

Belongs to the long-chain O-acyltransferase family.

It carries out the reaction an acyl-CoA + a 1,2-diacyl-sn-glycerol = a triacyl-sn-glycerol + CoA. Its pathway is glycerolipid metabolism; triacylglycerol biosynthesis. The protein is Putative diacyglycerol O-acyltransferase MT3584 of Mycobacterium tuberculosis (strain CDC 1551 / Oshkosh).